Consider the following 327-residue polypeptide: GMP reductase (327 aa).

Cysteine 176 functions as the Thioimidate intermediate in the catalytic mechanism. 205 to 228 (IIADGGIRTHGDIAKSIRFGATMV) contacts NADP(+).

This sequence belongs to the IMPDH/GMPR family. GuaC type 2 subfamily.

The enzyme catalyses IMP + NH4(+) + NADP(+) = GMP + NADPH + 2 H(+). Functionally, catalyzes the irreversible NADPH-dependent deamination of GMP to IMP. It functions in the conversion of nucleobase, nucleoside and nucleotide derivatives of G to A nucleotides, and in maintaining the intracellular balance of A and G nucleotides. The polypeptide is GMP reductase (Streptococcus equi subsp. zooepidemicus (strain H70)).